The primary structure comprises 572 residues: Proline--tRNA ligase (572 aa).

Belongs to the class-II aminoacyl-tRNA synthetase family. ProS type 1 subfamily. In terms of assembly, homodimer.

The protein resides in the cytoplasm. It catalyses the reaction tRNA(Pro) + L-proline + ATP = L-prolyl-tRNA(Pro) + AMP + diphosphate. Its function is as follows. Catalyzes the attachment of proline to tRNA(Pro) in a two-step reaction: proline is first activated by ATP to form Pro-AMP and then transferred to the acceptor end of tRNA(Pro). As ProRS can inadvertently accommodate and process non-cognate amino acids such as alanine and cysteine, to avoid such errors it has two additional distinct editing activities against alanine. One activity is designated as 'pretransfer' editing and involves the tRNA(Pro)-independent hydrolysis of activated Ala-AMP. The other activity is designated 'posttransfer' editing and involves deacylation of mischarged Ala-tRNA(Pro). The misacylated Cys-tRNA(Pro) is not edited by ProRS. This chain is Proline--tRNA ligase, found in Escherichia coli O17:K52:H18 (strain UMN026 / ExPEC).